The following is a 414-amino-acid chain: Putative dipeptidase TRV_05564 (414 aa).

A signal peptide spans 1–20 (MAALFVSLLALTSLVPVQGA). Residues H45, D47, and E157 each coordinate Zn(2+). C96 and C186 are joined by a disulfide. H184 serves as a coordination point for substrate. Residues H228 and H249 each coordinate Zn(2+). Residues R260 and D320 each coordinate substrate. Residue N392 is glycosylated (N-linked (GlcNAc...) asparagine).

It belongs to the metallo-dependent hydrolases superfamily. Peptidase M19 family. The cofactor is Zn(2+).

The enzyme catalyses an L-aminoacyl-L-amino acid + H2O = 2 an L-alpha-amino acid. Hydrolyzes a wide range of dipeptides. This chain is Putative dipeptidase TRV_05564, found in Trichophyton verrucosum (strain HKI 0517).